The chain runs to 1722 residues: Lymphocyte antigen 75 (1722 aa).

Residues 1-27 form the signal peptide; that stretch reads MGTRRVTPGCAAGLLVLLLRCFGLAEP. Over 28–1666 the chain is Extracellular; that stretch reads SEFSGDDSFT…VVCKVPLSPD (1639 aa). One can recognise a Ricin B-type lectin domain in the interval 32 to 182; sequence GDDSFTIVNE…FLVGETWHHD (151 aa). N-linked (GlcNAc...) asparagine glycosylation is present at Asn135. The 48-residue stretch at 164–211 folds into the Fibronectin type-II domain; it reads SYGRPCEFPFLVGETWHHDCIRDENHSGPWCATTLNYEYDQKWGICLK. 4 disulfide bridges follow: Cys169–Cys194, Cys183–Cys209, Cys247–Cys340, and Cys317–Cys332. The C-type lectin 1 domain occupies 225 to 341; that stretch reads QIGSCYQFNN…CEAQQPYVCK (117 aa). N-linked (GlcNAc...) asparagine glycosylation is found at Asn345 and Asn377. C-type lectin domains follow at residues 368–486, 493–625, and 652–791; these read QNGF…YVCK, NDTR…ICKK, and SNLS…WVCQ. 2 cysteine pairs are disulfide-bonded: Cys389/Cys485 and Cys462/Cys477. Asn529 carries an N-linked (GlcNAc...) asparagine glycan. Intrachain disulfides connect Cys597–Cys614, Cys678–Cys790, and Cys752–Cys782. N-linked (GlcNAc...) asparagine glycans are attached at residues Asn843 and Asn865. At Tyr933 the chain carries Phosphotyrosine. 2 N-linked (GlcNAc...) asparagine glycosylation sites follow: Asn934 and Asn1076. 2 consecutive C-type lectin domains span residues 958–1091 and 1110–1222; these read FQNK…LCQK and YLNN…ICYY. 2 cysteine pairs are disulfide-bonded: Cys1060–Cys1080 and Cys1197–Cys1211. Residues Asn1225, Asn1320, and Asn1392 are each glycosylated (N-linked (GlcNAc...) asparagine). A C-type lectin 7 domain is found at 1251 to 1374; it reads FQNSCYNFMI…VIDETLHFYQ (124 aa). C-type lectin domains are found at residues 1401–1513 and 1542–1661; these read YEDG…ICYK and YGDH…VCKV. A disulfide bridge links Cys1488 with Cys1502. N-linked (GlcNAc...) asparagine glycosylation is found at Asn1593 and Asn1626. A disulfide bond links Cys1635 and Cys1650. The chain crosses the membrane as a helical span at residues 1667 to 1691; that stretch reads YRGIAVLFAVLSVLALISGLIWFLV. Residues 1692–1722 lie on the Cytoplasmic side of the membrane; sequence QRNHFRWTGLSSVRYEHGANEDEVMLPSFHD. Ser1703 and Ser1719 each carry phosphoserine.

Expressed in the thymus and cultured bone marrow cells.

It localises to the membrane. Its function is as follows. Acts as an endocytic receptor to direct captured antigens from the extracellular space to a specialized antigen-processing compartment. Causes reduced proliferation of B lymphocytes. This Mesocricetus auratus (Golden hamster) protein is Lymphocyte antigen 75 (LY75).